Reading from the N-terminus, the 67-residue chain is Probable Sec-independent protein translocase protein TatE (67 aa).

A helical transmembrane segment spans residues 4–21; that stretch reads ISITKLLVVAALVVLLFG.

It belongs to the TatA/E family. TatE subfamily.

The protein localises to the cell inner membrane. Part of the twin-arginine translocation (Tat) system that transports large folded proteins containing a characteristic twin-arginine motif in their signal peptide across membranes. TatE shares overlapping functions with TatA. This Salmonella dublin (strain CT_02021853) protein is Probable Sec-independent protein translocase protein TatE.